The following is a 130-amino-acid chain: UPF0102 protein RPA0323 (130 aa).

The protein belongs to the UPF0102 family.

This is UPF0102 protein RPA0323 from Rhodopseudomonas palustris (strain ATCC BAA-98 / CGA009).